The following is a 347-amino-acid chain: GMP reductase (347 aa).

108-131 (ADFEKTVQILALNPALNFVCIDVA) is an NADP(+) binding site. K(+) contacts are provided by Gly-181 and Gly-183. Cys-186 acts as the Thioimidate intermediate in catalysis. 216 to 239 (IVSDGGCTMPGDVAKAFGGGADFV) provides a ligand contact to NADP(+).

This sequence belongs to the IMPDH/GMPR family. GuaC type 1 subfamily. As to quaternary structure, homotetramer.

The catalysed reaction is IMP + NH4(+) + NADP(+) = GMP + NADPH + 2 H(+). Catalyzes the irreversible NADPH-dependent deamination of GMP to IMP. It functions in the conversion of nucleobase, nucleoside and nucleotide derivatives of G to A nucleotides, and in maintaining the intracellular balance of A and G nucleotides. The polypeptide is GMP reductase (Salmonella paratyphi C (strain RKS4594)).